We begin with the raw amino-acid sequence, 164 residues long: Transmembrane protein B169L (164 aa).

Helical transmembrane passes span 28–48 (NPFI…FAIC) and 60–80 (TAIY…YVLN). An N-linked (GlcNAc...) asparagine; by host glycan is attached at Asn88. The interval 114 to 142 (SPPSVPDELEEDRPKMIPAGSKPADFKPA) is disordered.

It belongs to the asfivirus B169L family.

It localises to the host membrane. It is found in the virion. This chain is Transmembrane protein B169L, found in Ornithodoros (relapsing fever ticks).